A 483-amino-acid polypeptide reads, in one-letter code: Glutamyl-tRNA(Gln) amidotransferase subunit A (483 aa).

Catalysis depends on charge relay system residues Lys-75 and Ser-150. The Acyl-ester intermediate role is filled by Ser-174.

This sequence belongs to the amidase family. GatA subfamily. Heterotrimer of A, B and C subunits.

It catalyses the reaction L-glutamyl-tRNA(Gln) + L-glutamine + ATP + H2O = L-glutaminyl-tRNA(Gln) + L-glutamate + ADP + phosphate + H(+). Allows the formation of correctly charged Gln-tRNA(Gln) through the transamidation of misacylated Glu-tRNA(Gln) in organisms which lack glutaminyl-tRNA synthetase. The reaction takes place in the presence of glutamine and ATP through an activated gamma-phospho-Glu-tRNA(Gln). The polypeptide is Glutamyl-tRNA(Gln) amidotransferase subunit A (Microcystis aeruginosa (strain NIES-843 / IAM M-2473)).